The sequence spans 142 residues: HTH-type transcriptional regulator MntR (142 aa).

An HTH dtxR-type domain is found at 1–63 (MPTPSMEDYI…YEKYRGLVLT (63 aa)). 6 residues coordinate Mn(2+): D8, E11, H77, E99, E102, and H103.

It belongs to the DtxR/MntR family. In terms of assembly, homodimer.

It is found in the cytoplasm. DNA binding is strongly activated by Mn(2+). Functionally, central regulator of manganese homeostasis. This Bacillus cereus (strain B4264) protein is HTH-type transcriptional regulator MntR.